Here is a 454-residue protein sequence, read N- to C-terminus: Aspartokinase 3 (454 aa).

ACT domains follow at residues 312–388 (ISKY…ALIM) and 389–454 (VVGE…VLIS).

Belongs to the aspartokinase family. Monomer.

The catalysed reaction is L-aspartate + ATP = 4-phospho-L-aspartate + ADP. It participates in amino-acid biosynthesis; L-lysine biosynthesis via DAP pathway; (S)-tetrahydrodipicolinate from L-aspartate: step 1/4. It functions in the pathway amino-acid biosynthesis; L-methionine biosynthesis via de novo pathway; L-homoserine from L-aspartate: step 1/3. The protein operates within amino-acid biosynthesis; L-threonine biosynthesis; L-threonine from L-aspartate: step 1/5. Catalyzes the phosphorylation of the beta-carboxyl group of aspartic acid with ATP to yield 4-phospho-L-aspartate, which is involved in the branched biosynthetic pathway leading to the biosynthesis of amino acids threonine, isoleucine and methionine. The sequence is that of Aspartokinase 3 (yclM) from Bacillus subtilis (strain 168).